The primary structure comprises 284 residues: Bifunctional protein FolD (284 aa).

NADP(+) contacts are provided by residues 165–167 (GRS) and S190.

It belongs to the tetrahydrofolate dehydrogenase/cyclohydrolase family. As to quaternary structure, homodimer.

The enzyme catalyses (6R)-5,10-methylene-5,6,7,8-tetrahydrofolate + NADP(+) = (6R)-5,10-methenyltetrahydrofolate + NADPH. It catalyses the reaction (6R)-5,10-methenyltetrahydrofolate + H2O = (6R)-10-formyltetrahydrofolate + H(+). It functions in the pathway one-carbon metabolism; tetrahydrofolate interconversion. Its function is as follows. Catalyzes the oxidation of 5,10-methylenetetrahydrofolate to 5,10-methenyltetrahydrofolate and then the hydrolysis of 5,10-methenyltetrahydrofolate to 10-formyltetrahydrofolate. This chain is Bifunctional protein FolD, found in Streptococcus equi subsp. zooepidemicus (strain MGCS10565).